Consider the following 213-residue polypeptide: Anti-sigma-W factor RsiW (213 aa).

Residues 1–86 are Cytoplasmic-facing; the sequence is MSCEQHYRTL…TNRFKVWMRR (86 aa). Zn(2+) is bound by residues H30, C34, and C37. The chain crosses the membrane as a helical span at residues 87-109; the sequence is YPLAVAAAVFVLLMSTSLFSMWS. Topologically, residues 110–213 are extracellular; the sequence is SDGEHVTVTG…ISDEKNSPSS (104 aa).

The protein belongs to the zinc-associated anti-sigma factor (ZAS) superfamily. Anti-sigma-W factor family. Requires Zn(2+) as cofactor. Is processed by three successive proteolytic events. First, the extracellular region of RsiW is cleaved by PrsW (Site-1 cleavage) in response to cell envelope stresses. Next, it undergoes cleavage at an intramembrane site (Site-2 cleavage) mediated by RasP. This cleavage uncovers a cryptic proteolytic tag with conserved alanine residues in the transmembrane segment, that is recognized mainly by the ClpXP protease, which completely degrades the protein in the cytoplasm and leads to the induction of the sigma-W-controlled genes.

The protein resides in the membrane. Is the anti-sigma factor for SigW. The presence of RsiW leads to the inactivation of SigW, and its proteolytic destruction to sigma-W activation. The polypeptide is Anti-sigma-W factor RsiW (rsiW) (Halalkalibacterium halodurans (strain ATCC BAA-125 / DSM 18197 / FERM 7344 / JCM 9153 / C-125) (Bacillus halodurans)).